Reading from the N-terminus, the 712-residue chain is Protein SDA1 homolog (712 aa).

A Phosphothreonine modification is found at T234. Residue S236 is modified to Phosphoserine. Disordered stretches follow at residues 488–573 and 662–712; these read TIDI…DMRI and VNEH…KKMK. 2 stretches are compositionally biased toward acidic residues: residues 491-501 and 516-559; these read IESEDDTDSND and GADD…ESGE. The span at 560-572 shows a compositional bias: basic and acidic residues; that stretch reads ESAKAKKEKKDMR. 2 stretches are compositionally biased toward basic residues: residues 671-692 and 700-712; these read REKR…KVKK and ALRK…KKMK.

This sequence belongs to the SDA1 family.

It is found in the nucleus. It localises to the nucleolus. Functionally, required for 60S pre-ribosomal subunits export to the cytoplasm. This chain is Protein SDA1 homolog (Mys45A), found in Drosophila melanogaster (Fruit fly).